Reading from the N-terminus, the 393-residue chain is NAD(P)H-quinone oxidoreductase subunit H, chloroplastic (393 aa).

Belongs to the complex I 49 kDa subunit family. In terms of assembly, NDH is composed of at least 16 different subunits, 5 of which are encoded in the nucleus.

The protein localises to the plastid. It localises to the chloroplast thylakoid membrane. It catalyses the reaction a plastoquinone + NADH + (n+1) H(+)(in) = a plastoquinol + NAD(+) + n H(+)(out). The enzyme catalyses a plastoquinone + NADPH + (n+1) H(+)(in) = a plastoquinol + NADP(+) + n H(+)(out). Its function is as follows. NDH shuttles electrons from NAD(P)H:plastoquinone, via FMN and iron-sulfur (Fe-S) centers, to quinones in the photosynthetic chain and possibly in a chloroplast respiratory chain. The immediate electron acceptor for the enzyme in this species is believed to be plastoquinone. Couples the redox reaction to proton translocation, and thus conserves the redox energy in a proton gradient. This chain is NAD(P)H-quinone oxidoreductase subunit H, chloroplastic, found in Psilotum nudum (Whisk fern).